The primary structure comprises 299 residues: Probable alpha-L-glutamate ligase (299 aa).

One can recognise an ATP-grasp domain in the interval 112–294 (LQLLTEQGIA…IALQMIVHIE (183 aa)). ATP-binding positions include Lys148, 185–186 (DF), Asp194, and 218–220 (RAN). Residues Asp255, Glu267, and Asn269 each contribute to the Mg(2+) site. Mn(2+) is bound by residues Asp255, Glu267, and Asn269.

It belongs to the RimK family. Mg(2+) serves as cofactor. Requires Mn(2+) as cofactor.

In Histophilus somni (strain 129Pt) (Haemophilus somnus), this protein is Probable alpha-L-glutamate ligase.